Here is a 513-residue protein sequence, read N- to C-terminus: Light-independent protochlorophyllide reductase subunit B (513 aa).

Asp-36 is a [4Fe-4S] cluster binding site. Asp-299 functions as the Proton donor in the catalytic mechanism. 434 to 435 (GM) is a substrate binding site.

This sequence belongs to the ChlB/BchB/BchZ family. As to quaternary structure, protochlorophyllide reductase is composed of three subunits; ChlL, ChlN and ChlB. Forms a heterotetramer of two ChlB and two ChlN subunits. [4Fe-4S] cluster is required as a cofactor.

Its subcellular location is the plastid. The protein resides in the chloroplast. The catalysed reaction is chlorophyllide a + oxidized 2[4Fe-4S]-[ferredoxin] + 2 ADP + 2 phosphate = protochlorophyllide a + reduced 2[4Fe-4S]-[ferredoxin] + 2 ATP + 2 H2O. Its pathway is porphyrin-containing compound metabolism; chlorophyll biosynthesis (light-independent). Its function is as follows. Component of the dark-operative protochlorophyllide reductase (DPOR) that uses Mg-ATP and reduced ferredoxin to reduce ring D of protochlorophyllide (Pchlide) to form chlorophyllide a (Chlide). This reaction is light-independent. The NB-protein (ChlN-ChlB) is the catalytic component of the complex. The chain is Light-independent protochlorophyllide reductase subunit B from Staurastrum punctulatum (Green alga).